The chain runs to 163 residues: 16S rRNA aminocarboxypropyltransferase (163 aa).

4 residues coordinate S-adenosyl-L-methionine: threonine 18, isoleucine 66, leucine 87, and serine 106.

Belongs to the TDD superfamily. TSR3 family.

It is found in the cytoplasm. It carries out the reaction an N(1)-methylpseudouridine in rRNA + S-adenosyl-L-methionine = N(1)-methyl-N(3)-[(3S)-3-amino-3-carboxypropyl]pseudouridine in rRNA + S-methyl-5'-thioadenosine + H(+). Its function is as follows. Aminocarboxypropyltransferase that catalyzes the aminocarboxypropyl transfer on pseudouridine corresponding to position 914 in M.jannaschii 16S rRNA. It constitutes the last step in biosynthesis of the hypermodified N1-methyl-N3-(3-amino-3-carboxypropyl) pseudouridine (m1acp3-Psi). The chain is 16S rRNA aminocarboxypropyltransferase from Thermoplasma acidophilum (strain ATCC 25905 / DSM 1728 / JCM 9062 / NBRC 15155 / AMRC-C165).